A 219-amino-acid chain; its full sequence is Ribose-5-phosphate isomerase A (219 aa).

Substrate-binding positions include 28–31 (TGST), 81–84 (DGAD), and 94–97 (KGGG). Glu-103 (proton acceptor) is an active-site residue. Residue Lys-121 coordinates substrate.

This sequence belongs to the ribose 5-phosphate isomerase family. Homodimer.

It carries out the reaction aldehydo-D-ribose 5-phosphate = D-ribulose 5-phosphate. Its pathway is carbohydrate degradation; pentose phosphate pathway; D-ribose 5-phosphate from D-ribulose 5-phosphate (non-oxidative stage): step 1/1. Its function is as follows. Catalyzes the reversible conversion of ribose-5-phosphate to ribulose 5-phosphate. This Shewanella sp. (strain ANA-3) protein is Ribose-5-phosphate isomerase A.